The sequence spans 474 residues: Mitogen-activated protein kinase pmk-3 (474 aa).

A compositionally biased stretch (low complexity) spans Met-1–Ser-13. The disordered stretch occupies residues Met-1–Pro-90. The span at Lys-30–Leu-48 shows a compositional bias: polar residues. Over residues Arg-52–Ser-69 the composition is skewed to basic and acidic residues. One can recognise a Protein kinase domain in the interval Tyr-114–Leu-419. ATP is bound by residues Leu-124–Val-132 and Lys-150. Asp-252 functions as the Proton acceptor in the catalytic mechanism. Thr-285 carries the post-translational modification Phosphothreonine. The TXY motif lies at Thr-285–Tyr-287. Tyr-287 carries the post-translational modification Phosphotyrosine.

Belongs to the protein kinase superfamily. CMGC Ser/Thr protein kinase family. MAP kinase subfamily. As to quaternary structure, interacts with mak-2. May interact with vhp-1. May interact with uev-3. Mg(2+) is required as a cofactor. Post-translationally, dually phosphorylated on Thr-285 and Tyr-287, which activates the enzyme. As to expression, expressed throughout the intestine.

It localises to the nucleus. The protein resides in the cytoplasm. It is found in the cell projection. The protein localises to the axon. Its subcellular location is the dendrite. It localises to the cilium. The catalysed reaction is L-seryl-[protein] + ATP = O-phospho-L-seryl-[protein] + ADP + H(+). It catalyses the reaction L-threonyl-[protein] + ATP = O-phospho-L-threonyl-[protein] + ADP + H(+). Its activity is regulated as follows. Activated by phosphorylation on threonine and tyrosine. In terms of biological role, responds to activation by environmental stress and pro-inflammatory cytokines by phosphorylating downstream targets. Involved in axon regeneration after injury, probably downstream of dlk-1 and mkk-4 and upstream of mak-2. May phosphorylate mak-2. Plays a role in cilium length regulation, possibly by reducing rab-5 mediated endocytosis. Plays a role in the formation of muscle connections, also called muscle arm extensions, between the body wall and the motor axons in the dorsal and ventral cord. This Caenorhabditis elegans protein is Mitogen-activated protein kinase pmk-3 (pmk-3).